We begin with the raw amino-acid sequence, 463 residues long: Cysteine--tRNA ligase (463 aa).

Cysteine 29 lines the Zn(2+) pocket. The 'HIGH' region motif lies at 31 to 41; the sequence is PTVYDFAHIGN. Residues cysteine 227, histidine 252, and glutamate 256 each contribute to the Zn(2+) site. The 'KMSKS' region motif lies at 285 to 289; that stretch reads KMSKS. An ATP-binding site is contributed by lysine 288.

Belongs to the class-I aminoacyl-tRNA synthetase family. In terms of assembly, monomer. Requires Zn(2+) as cofactor.

It is found in the cytoplasm. The enzyme catalyses tRNA(Cys) + L-cysteine + ATP = L-cysteinyl-tRNA(Cys) + AMP + diphosphate. The sequence is that of Cysteine--tRNA ligase from Rhodopseudomonas palustris (strain ATCC BAA-98 / CGA009).